The primary structure comprises 371 residues: F-box protein At2g41170 (371 aa).

The F-box domain maps to 56-102 (KMSLLDLPDLTLDCILEKLSPSELCAMTSVCSELRDKCVSDHLWEKH).

The protein is F-box protein At2g41170 of Arabidopsis thaliana (Mouse-ear cress).